Here is a 432-residue protein sequence, read N- to C-terminus: MSKAFSAPGKAFLAGGYLVLEPIYDAYVTALSSRMHAVITPKGTSLKESRIKISSPQFANGEWEYHISSNTEKPKEVQSRINPFLEATIFIVLAYIQPTEAFDLEIIIYSDPGYHSQEDTETKTSSNGEKTFLYHSRAITEVEKTGLGSSAGLVSVVATSLLSHFIPNVISTNKDILHNVAQIAHCYAQKKIGSGFDVATAIYGSIVYRRFQPALINDVFQVLESDPEKFPTELKKLIASNWEFKHERCTLPHGIKLLMGDVKGGSETPKLVSRVLQWKKEKPEESSVVYDQLNSANLQFMKELREMREKYDSDPETYIKELDHSIEPLTVAIKNIRKGLQALTQKSEVPIEPDVQTQLLDRCQEIPGCVGGVVPGAGGYDAIAVLVLENQVGNFKQKTLENPDYFHNVYWVDLEEQTEGVLEEKPEDYIGL.

ATP is bound by residues Lys10 and 142–148; that span reads VEKTGLG.

The protein belongs to the GHMP kinase family. Mevalonate kinase subfamily.

The protein localises to the cytoplasm. It carries out the reaction (R)-5-phosphomevalonate + ATP = (R)-5-diphosphomevalonate + ADP. The protein operates within isoprenoid biosynthesis; isopentenyl diphosphate biosynthesis via mevalonate pathway; isopentenyl diphosphate from (R)-mevalonate: step 2/3. Functionally, phosphomevalonate kinase; part of the second module of ergosterol biosynthesis pathway that includes the middle steps of the pathway. ERG8 converts 5-phosphomevalonate to 5-diphosphomevalonate. The second module is carried out in the vacuole and involves the formation of farnesyl diphosphate, which is also an important intermediate in the biosynthesis of ubiquinone, dolichol, heme and prenylated proteins. Activity by the mevalonate kinase ERG12 first converts mevalonate into 5-phosphomevalonate. 5-phosphomevalonate is then further converted to 5-diphosphomevalonate by the phosphomevalonate kinase ERG8. The diphosphomevalonate decarboxylase MVD then produces isopentenyl diphosphate. The isopentenyl-diphosphate delta-isomerase IDI1 then catalyzes the 1,3-allylic rearrangement of the homoallylic substrate isopentenyl (IPP) to its highly electrophilic allylic isomer, dimethylallyl diphosphate (DMAPP). Finally the farnesyl diphosphate synthase ERG20 catalyzes the sequential condensation of isopentenyl pyrophosphate with dimethylallyl pyrophosphate, and then with the resultant geranylpyrophosphate to the ultimate product farnesyl pyrophosphate. In Candida albicans (strain SC5314 / ATCC MYA-2876) (Yeast), this protein is Phosphomevalonate kinase.